The sequence spans 223 residues: DNA mismatch repair protein MutH (223 aa).

The protein belongs to the MutH family.

The protein resides in the cytoplasm. Its function is as follows. Sequence-specific endonuclease that cleaves unmethylated GATC sequences. It is involved in DNA mismatch repair. This Haemophilus influenzae (strain PittGG) protein is DNA mismatch repair protein MutH.